Consider the following 231-residue polypeptide: Quercetin 2,3-dioxygenase (231 aa).

Residues H57, H59, H101, and E103 each coordinate a divalent metal cation.

The protein belongs to the pirin family. Zn(2+) serves as cofactor. Requires Co(2+) as cofactor. The cofactor is Fe(2+).

It carries out the reaction quercetin + O2 = 2-(3,4-dihydroxybenzoyloxy)-4,6-dihydroxybenzoate + CO. It functions in the pathway flavonoid metabolism; quercetin degradation. With respect to regulation, inhibited by kojic acid, sodium diethyldithiocarbamate and 1,10-phenanthroline monohydrochloride. Its function is as follows. Has quercetin 2,3-dioxygenase activity in vitro. Its physiological role is unknown; however, may provide a mechanism that would avoid inhibition of key cellular proteins, such as DNA gyrase, by quercetin. This is Quercetin 2,3-dioxygenase (yhhW) from Escherichia coli (strain K12).